Consider the following 438-residue polypeptide: Cyanidin-3-O-glucoside 2-O-glucuronosyltransferase (438 aa).

UDP-alpha-D-glucuronate is bound by residues Ser264, 315-316, 333-341, and 355-358; these read WV, HCGWSSTME, and QFDQ.

This sequence belongs to the UDP-glycosyltransferase family. Monomer. In terms of tissue distribution, expressed in petals. Not detected in sepals, stems, leaves, tubular corollas and white petals.

The protein resides in the cytoplasm. It catalyses the reaction cyanidin 3-O-beta-D-glucoside + UDP-alpha-D-glucuronate = cyanidin 3-O-(2-O-beta-D-glucuronosyl)-beta-D-glucoside + UDP + H(+). Inhibited by copper, mercury, UDP, UTP and partially by calcium, cadmium, iron and UMP. Not affected by cobalt, magnesium, manganese, zinc, nickel, tin, uridine, sadium malonate and glucose. In terms of biological role, involved in the production of glucuronosylated anthocyanins that are the origin of the red coloration of flowers. Can use cyanidin 3-O-6''-O-malonylglucoside, cyanidin 3-O-glucoside and delphinidin 3-O-glucosideas substrates, but not pelargonidin 3-O-glucoside, cyanidin 3-O-3'',6''-O-dimalonylglucoside, pelargonidin 3,5-O-diglucoside, pelargonidin 3-O-6''-O-malonylglucoside-5-O-glucoside, quercetin 3-O-glucoside, quercetin 3-O-6''-O-malonylglucoside, daidzin, genistin,7-O-6''-O-malonylglucosides of daidzein and genistein, cyanidin, quercetin, daidzein, genistein p-Nitrophenyl beta-D-glucopyranoside, beta-estradiol, 17alpha-estradiol, 1-naphthol, 2-naphthol, 4-methylumbelliferone, and p-nitrophenol. Highly specific for UDP-glucuronate (UDP-GlcUA). Arg-25 is decisive with respect to UDP-sugar specificity. The polypeptide is Cyanidin-3-O-glucoside 2-O-glucuronosyltransferase (UGAT) (Bellis perennis (English daisy)).